We begin with the raw amino-acid sequence, 488 residues long: uncharacterized protein (488 aa).

An NAD(+)-binding site is contributed by 27–38; it reads IVHFGFGAFHRA.

Belongs to the mannitol dehydrogenase family. UxuB subfamily.

This is an uncharacterized protein from Escherichia coli (strain K12).